Here is a 2072-residue protein sequence, read N- to C-terminus: Protein still life, isoform SIF type 1 (2072 aa).

Residue G2 is the site of N-myristoyl glycine attachment. The WH1 domain occupies 29-147; the sequence is RRDGHLLSSF…ECCSPSFKFS (119 aa). Disordered regions lie at residues 153-188, 245-284, 327-355, 459-486, 502-576, 618-655, and 699-747; these read SYSLKLDPPGKGKVKAKRKPLSTPASPSRVRQEPQC, DNVASGGPGTNQGADTLPRQMKGGQQDRQDVANSGVNTNT, EGTQAGGGLHQSVGTCTSSSKGTGTRNKD, NNTMGRASSQSSRFSGSRSSHEIGRGYP, EGSP…SPTS, AKSSTLPLPPHRPLSTIRDKERDRDRDGYYSDRNELIR, and SGSS…YKSA. Residues 275 to 284 are compositionally biased toward polar residues; it reads VANSGVNTNT. Composition is skewed to low complexity over residues 338–351, 459–476, and 522–553; these read SVGTCTSSSKGTGT, NNTMGRASSQSSRFSGSR, and SSSNGNSDQDQSYGQQQSSGQHPQQQQGPPQR. The span at 564–576 shows a compositional bias: polar residues; that stretch reads APNVTPTPGSPTS. Over residues 634-655 the composition is skewed to basic and acidic residues; the sequence is IRDKERDRDRDGYYSDRNELIR. Over residues 732–743 the composition is skewed to polar residues; it reads SLRQDSSLNDSG. Residues 840–958 enclose the PH domain; sequence TGAVRKAGFL…SIHSACAAAF (119 aa). The disordered stretch occupies residues 1088–1119; it reads GRGATKRRPPMLSRSNSGSSRRSMQMNSRDEP. Over residues 1100–1114 the composition is skewed to low complexity; sequence SRSNSGSSRRSMQMN. An RBD domain is found at 1121–1188; sequence KTFKVAMPDN…PHRNDLIENY (68 aa). Positions 1204–1293 constitute a PDZ domain; the sequence is QVELQRTTLE…LSMMMRSSRT (90 aa). The interval 1403–1424 is disordered; that stretch reads AEQETRKSSPTGSVTSSVSTTA. Residues 1410–1424 are compositionally biased toward low complexity; the sequence is SSPTGSVTSSVSTTA. One can recognise a DH domain in the interval 1436–1630; the sequence is KLRKVVMELV…EKVAEHINEM (195 aa). Disordered stretches follow at residues 1803 to 1832, 1844 to 2039, and 2051 to 2072; these read MKNFGGSSGSVSGHSSQGMGSMGYPGNSQT, HGSH…YQPV, and PRDMINLGTDPQSTTRKDDVKN. 2 stretches are compositionally biased toward low complexity: residues 1811-1821 and 1926-1943; these read GSVSGHSSQGM and QQQQQQQQQQQQLMQQGH. Residues 1970–1984 show a composition bias toward basic and acidic residues; sequence HSSDIERIDPGTKSE. A compositionally biased stretch (low complexity) spans 2007–2022; the sequence is LTLSTTSTLSVGSTGS. Over residues 2023-2032 the composition is skewed to polar residues; sequence QARLIQSSHP.

Expressed in both larval and adult brains, mainly in a subset of neurons but not in glia. In the adult eye is expressed in the two primary pigment cells in the subapical region of the eye. Also present in photoreceptors.

It localises to the synapse. In terms of biological role, regulates synaptic differentiation through the organization of actin cytoskeleton possibly by activating Rho-like GTPases. Is likely a factor in the cascade of Rac1 or Cdc42 in the neurons. May play a role in maintaining proper septate junction functions. Required for eye development and most likely affects corneal lens-formation. The sequence is that of Protein still life, isoform SIF type 1 (sif) from Drosophila melanogaster (Fruit fly).